A 169-amino-acid polypeptide reads, in one-letter code: Peptide methionine sulfoxide reductase MsrA (169 aa).

The active site involves cysteine 10.

Belongs to the MsrA Met sulfoxide reductase family.

The enzyme catalyses L-methionyl-[protein] + [thioredoxin]-disulfide + H2O = L-methionyl-(S)-S-oxide-[protein] + [thioredoxin]-dithiol. It catalyses the reaction [thioredoxin]-disulfide + L-methionine + H2O = L-methionine (S)-S-oxide + [thioredoxin]-dithiol. In terms of biological role, has an important function as a repair enzyme for proteins that have been inactivated by oxidation. Catalyzes the reversible oxidation-reduction of methionine sulfoxide in proteins to methionine. This is Peptide methionine sulfoxide reductase MsrA from Streptococcus pyogenes serotype M6 (strain ATCC BAA-946 / MGAS10394).